Here is a 236-residue protein sequence, read N- to C-terminus: MEKRDELYRGKAKSVFKTDDADRLILLFRNDTSAFDGKRIEQLDRKGMVNNKFNAFIMQKLEEAGVPTQFDKLLGDNECLVKKLDMIPVECVVRNYAAGSLVKRLGVEEGIKLEPSTFELFLKNDEKGDPFINESHVVAFGWGTAEQLVEMKKLSLKVNEVLSKLFDDAGLLLVDFKLEFGVFHGQIVLGDEFSPDGCRLWDKETRKKMDKDRFRQGLGDVIEAYEEVAKRLGVPL.

This sequence belongs to the SAICAR synthetase family.

It carries out the reaction 5-amino-1-(5-phospho-D-ribosyl)imidazole-4-carboxylate + L-aspartate + ATP = (2S)-2-[5-amino-1-(5-phospho-beta-D-ribosyl)imidazole-4-carboxamido]succinate + ADP + phosphate + 2 H(+). It participates in purine metabolism; IMP biosynthesis via de novo pathway; 5-amino-1-(5-phospho-D-ribosyl)imidazole-4-carboxamide from 5-amino-1-(5-phospho-D-ribosyl)imidazole-4-carboxylate: step 1/2. The polypeptide is Phosphoribosylaminoimidazole-succinocarboxamide synthase (Pseudomonas putida (strain GB-1)).